The chain runs to 585 residues: Zinc finger protein 614 (585 aa).

Residues 8-79 (LTLEDVAVEF…DAKIQNKNCP (72 aa)) form the KRAB domain. A C2H2-type 1; atypical zinc finger spans residues 205–227 (HACIECEQTFLRKSQLIYHENIC). A C2H2-type 2; degenerate zinc finger spans residues 257–281 (KICIPNEYRKGSTVKSSLITHQQTH). 10 C2H2-type zinc fingers span residues 287-309 (YMCS…QRTH), 315-337 (YVCK…QRTH), 343-365 (YICS…QRTH), 371-393 (YMCS…QRSH), 399-421 (YICS…QRTH), 427-449 (YICN…QRTH), 455-477 (YECN…ERCH), 483-505 (FVCT…QRIH), 511-533 (YECN…QRTH), and 539-561 (YGCS…KKMH).

It belongs to the krueppel C2H2-type zinc-finger protein family.

It is found in the nucleus. Functionally, may be involved in transcriptional regulation. The polypeptide is Zinc finger protein 614 (ZNF614) (Homo sapiens (Human)).